Here is a 448-residue protein sequence, read N- to C-terminus: Exodeoxyribonuclease 7 large subunit (448 aa).

The protein belongs to the XseA family. As to quaternary structure, heterooligomer composed of large and small subunits.

It localises to the cytoplasm. The enzyme catalyses Exonucleolytic cleavage in either 5'- to 3'- or 3'- to 5'-direction to yield nucleoside 5'-phosphates.. Its function is as follows. Bidirectionally degrades single-stranded DNA into large acid-insoluble oligonucleotides, which are then degraded further into small acid-soluble oligonucleotides. This is Exodeoxyribonuclease 7 large subunit from Nitrosomonas europaea (strain ATCC 19718 / CIP 103999 / KCTC 2705 / NBRC 14298).